Reading from the N-terminus, the 549-residue chain is Cytoplasmic trehalase (549 aa).

Residues Arg168, 175–176 (WD), Asn212, 221–223 (RSQ), 292–294 (RDE), and Gly324 each bind substrate. Residues Asp326 and Glu509 each act as proton donor/acceptor in the active site. Substrate is bound at residue Glu525.

It belongs to the glycosyl hydrolase 37 family. As to quaternary structure, monomer.

The protein localises to the cytoplasm. The enzyme catalyses alpha,alpha-trehalose + H2O = alpha-D-glucose + beta-D-glucose. It participates in glycan degradation; trehalose degradation; D-glucose from alpha,alpha-trehalose: step 1/1. Its function is as follows. Hydrolyzes trehalose to glucose. Could be involved, in cells returning to low osmolarity conditions, in the utilization of the accumulated cytoplasmic trehalose, which was synthesized in response to high osmolarity. The protein is Cytoplasmic trehalase of Escherichia coli (strain 55989 / EAEC).